We begin with the raw amino-acid sequence, 120 residues long: Flagellar protein FliT (120 aa).

The tract at residues 1-50 is required for homodimerization; sequence MERHQHLLSEYQQILTLSEQMLMLATVENWDALVDLEMAYLKAVENTANI. The tract at residues 60 to 98 is fliD binding; the sequence is LQELLRQKLRSILENEIEIKRLLQRRLDKLSELVGQSTR.

It belongs to the FliT family. As to quaternary structure, homodimer. Interacts with FliD and FlhC.

Its subcellular location is the cytoplasm. It is found in the cytosol. Dual-function protein that regulates the transcription of class 2 flagellar operons and that also acts as an export chaperone for the filament-capping protein FliD. As a transcriptional regulator, acts as an anti-FlhDC factor; it directly binds FlhC, thus inhibiting the binding of the FlhC/FlhD complex to class 2 promoters, resulting in decreased expression of class 2 flagellar operons. As a chaperone, effects FliD transition to the membrane by preventing its premature polymerization, and by directing it to the export apparatus. This chain is Flagellar protein FliT, found in Yersinia pseudotuberculosis serotype IB (strain PB1/+).